Here is a 430-residue protein sequence, read N- to C-terminus: Histidinol dehydrogenase (430 aa).

Residues Tyr-130, Gln-191, and Asn-214 each contribute to the NAD(+) site. 3 residues coordinate substrate: Ser-237, Gln-259, and His-262. The Zn(2+) site is built by Gln-259 and His-262. Active-site proton acceptor residues include Glu-327 and His-328. 4 residues coordinate substrate: His-328, Asp-361, Glu-415, and His-420. Asp-361 lines the Zn(2+) pocket. Residue His-420 participates in Zn(2+) binding.

It belongs to the histidinol dehydrogenase family. The cofactor is Zn(2+).

The enzyme catalyses L-histidinol + 2 NAD(+) + H2O = L-histidine + 2 NADH + 3 H(+). The protein operates within amino-acid biosynthesis; L-histidine biosynthesis; L-histidine from 5-phospho-alpha-D-ribose 1-diphosphate: step 9/9. Its function is as follows. Catalyzes the sequential NAD-dependent oxidations of L-histidinol to L-histidinaldehyde and then to L-histidine. The protein is Histidinol dehydrogenase (hisD) of Zymomonas mobilis subsp. mobilis (strain ATCC 31821 / ZM4 / CP4).